The following is a 213-amino-acid chain: Glutathione S-transferase (213 aa).

Positions 4 to 81 constitute a GST N-terminal domain; that stretch reads AKPILYGAWI…YLEDKYPQHP (78 aa). The GST C-terminal domain maps to 86–211; that stretch reads DIKTKGLDLQ…LPQNQPDAPS (126 aa).

This sequence belongs to the GST superfamily. Zeta family.

The protein localises to the cytoplasm. It catalyses the reaction RX + glutathione = an S-substituted glutathione + a halide anion + H(+). In terms of biological role, has a glutathione transferase activity with ethacrynic acid and nitrophenyl acetate. Has low glutathione peroxidase activity with cumene hydroperoxide. This is Glutathione S-transferase (GSTZ1) from Triticum aestivum (Wheat).